The sequence spans 71 residues: Small ribosomal subunit protein bS21 (71 aa).

This sequence belongs to the bacterial ribosomal protein bS21 family.

The protein is Small ribosomal subunit protein bS21 of Dichelobacter nodosus (strain VCS1703A).